We begin with the raw amino-acid sequence, 273 residues long: 4-hydroxy-tetrahydrodipicolinate reductase (273 aa).

NAD(+) is bound by residues 8–13 (GACGRM), E34, 102–104 (GTT), and 128–131 (APNM). H160 (proton donor/acceptor) is an active-site residue. (S)-2,3,4,5-tetrahydrodipicolinate is bound at residue H161. K164 serves as the catalytic Proton donor. 170–171 (GT) is a binding site for (S)-2,3,4,5-tetrahydrodipicolinate.

The protein belongs to the DapB family.

The protein localises to the cytoplasm. It carries out the reaction (S)-2,3,4,5-tetrahydrodipicolinate + NAD(+) + H2O = (2S,4S)-4-hydroxy-2,3,4,5-tetrahydrodipicolinate + NADH + H(+). The catalysed reaction is (S)-2,3,4,5-tetrahydrodipicolinate + NADP(+) + H2O = (2S,4S)-4-hydroxy-2,3,4,5-tetrahydrodipicolinate + NADPH + H(+). The protein operates within amino-acid biosynthesis; L-lysine biosynthesis via DAP pathway; (S)-tetrahydrodipicolinate from L-aspartate: step 4/4. In terms of biological role, catalyzes the conversion of 4-hydroxy-tetrahydrodipicolinate (HTPA) to tetrahydrodipicolinate. This is 4-hydroxy-tetrahydrodipicolinate reductase from Methanothermobacter thermautotrophicus (strain ATCC 29096 / DSM 1053 / JCM 10044 / NBRC 100330 / Delta H) (Methanobacterium thermoautotrophicum).